Consider the following 203-residue polypeptide: SPbeta prophage-derived uncharacterized protein YouA (203 aa).

Positions 1 to 23 are disordered; the sequence is MAFLNQDGDKYTSAKDDGTGNPI. Positions 7-18 are enriched in basic and acidic residues; sequence DGDKYTSAKDDG.

This is SPbeta prophage-derived uncharacterized protein YouA (youA) from Bacillus subtilis (strain 168).